The sequence spans 1368 residues: MAYSFTEKKRIRKSFAKRATVHQVPFLLATQIESYTQFLQAETPPARRKSEGLQAAFNAIFPISSHNGLARMEFVSYHLSNPPFDVKECQQRGLTFHSALRAKVRLIINDRENPGKVKEVKEQEVYMGEIPLMTSTGSFVINGTERVIVSQLHRSPGVFFEHDKGKTHSSGKLLFSARIIPYRGSWLDFEFDPKDILYFRVDRRRKMPVTILLKSIGLTPEQILAHFFVFDNFTLQSEGAQLEFVPERLRGEVARFDIVDKNGRVVVEKDKRINAKHIRDLDSAGTKLISVPEDYLLGRVLAKNIIDPDTGEVIANANDELTETLLENLREAGVKDIQTLYTNDLDQGPYISQTLRADDTADQTAARIAIYRMMRPGEPPTEDAVEALFQRLFYSEESYDLSRVGRMKVNSRLSRPSGEGSMVLQDEDILETIKILVNLRNGKGEVDDIDHLGNRRVRCVGELAENQFRAGLSRVERAVKERLGQAETENLMPHDLINSKPISSAIREFFGSSQLSQFMDQTNPLSEITHKRRVSALGPGGLTRERAGFEVRDVHPTHYGRVCPIETPEGPNIGLINSLALYARLNEYGFLETPYRKVENSKLTDQVDYLSAIEEGKYVVAQANATVDAEGNLIDELVSAREGSERETRMVTPDRVQYIDVAPSQIVSAAASLVPFLEHDDANRALMGANMQRQAVPCLRPDKPLVGTGIERTVAVDSGTAVQATRGGVVDYVDAMRVVIRVNDDEAVAGEVGVDIYNLIKYTRSNQNTNINQRPMVKVGDIVARGDVIADGASTDLGELALGQNMLVAFMPWNGYNFEDSILISERVVAEDRYTSIHIEELSVVARDTKLGPEEITRDISNLAEAQLARLDESGITYIGAEVEAGDVLVGKVTPKGETQLTPEEKLLRAIFGEKASDVKDTSLRVPSGMSGIVIDVQVFTREGVTRDKRAQSIIDDELKRYRLDLNDQLRIVEGDAFQRLERMLLDKTVNGGPKKLAKGAKLTREYLADLDKYHWFDIRPADEEVAAQLEAVKEAIEQKRHEFDLAFEEKRKKLTQGDELPPGVIKMVKVYLAVKRRLQPGDKMAGRHGNKGVVSKIVPIEDMPYMADGTPADIVLNPLGVPSRMNVGQILETHLGWAARGLGQRIGDMLKASAKAQELRPLLAQIYNESGKAEDLDSLSDAEVLELAGNLKKGVPFATPVFDGAHEAEIRRMLDLAYPDDIAKERGLTASKQQVTLHDGRTGEAFERPVTLGVMHMLKLHHLVDDKMHARSTGPYSLVTQQPLGGKAQFGGQRFGEMEVWALEAYGASYVLQEMLTVKSDDVNGRTKVYENIVKGEHSIDAGMPESFNVLVKEIRSLGIDIDLDRY.

Belongs to the RNA polymerase beta chain family. In terms of assembly, the RNAP catalytic core consists of 2 alpha, 1 beta, 1 beta' and 1 omega subunit. When a sigma factor is associated with the core the holoenzyme is formed, which can initiate transcription.

The catalysed reaction is RNA(n) + a ribonucleoside 5'-triphosphate = RNA(n+1) + diphosphate. Functionally, DNA-dependent RNA polymerase catalyzes the transcription of DNA into RNA using the four ribonucleoside triphosphates as substrates. This is DNA-directed RNA polymerase subunit beta from Cupriavidus metallidurans (strain ATCC 43123 / DSM 2839 / NBRC 102507 / CH34) (Ralstonia metallidurans).